The primary structure comprises 307 residues: Glutaminase 1 (307 aa).

Substrate is bound by residues Ser62, Asn114, Glu159, Asn166, Tyr190, Tyr242, and Val260.

The protein belongs to the glutaminase family. Homotetramer.

The enzyme catalyses L-glutamine + H2O = L-glutamate + NH4(+). The sequence is that of Glutaminase 1 from Clostridium perfringens (strain 13 / Type A).